We begin with the raw amino-acid sequence, 1322 residues long: Transcription elongation factor SPT6-like (1322 aa).

Positions 1–17 are enriched in basic and acidic residues; the sequence is MNRIDEEPQIHEDPVEN. 2 disordered regions span residues 1–65 and 90–113; these read MNRI…KKDE and KRLK…DLSH. Residues 18 to 33 show a composition bias toward acidic residues; sequence REEDDEDEDDQYEFDD. Residues 48-65 show a composition bias toward basic and acidic residues; that stretch reads EQRHCSEKKSRSRRKKDE. The span at 97 to 110 shows a compositional bias: acidic residues; sequence EEEDKINNDDDDDD. The 72-residue stretch at 1017-1088 folds into the S1 motif domain; sequence GRIVQATVKK…QRYHVLLVCK (72 aa).

Belongs to the SPT6 family.

Its subcellular location is the nucleus. Functionally, transcription elongation factor that enhances the transcription elongation by RNA polymerase II (RNAPII). In Arabidopsis thaliana (Mouse-ear cress), this protein is Transcription elongation factor SPT6-like.